The following is a 133-amino-acid chain: Small ribosomal subunit protein bS16 (133 aa).

The segment covering Lys-83–Glu-101 has biased composition (basic and acidic residues). The interval Lys-83–Arg-102 is disordered.

Belongs to the bacterial ribosomal protein bS16 family.

This chain is Small ribosomal subunit protein bS16, found in Mesorhizobium japonicum (strain LMG 29417 / CECT 9101 / MAFF 303099) (Mesorhizobium loti (strain MAFF 303099)).